Here is a 362-residue protein sequence, read N- to C-terminus: Putative glutamate--cysteine ligase 2-1 (362 aa).

It belongs to the glutamate--cysteine ligase type 2 family. YbdK subfamily.

The catalysed reaction is L-cysteine + L-glutamate + ATP = gamma-L-glutamyl-L-cysteine + ADP + phosphate + H(+). Functionally, ATP-dependent carboxylate-amine ligase which exhibits weak glutamate--cysteine ligase activity. The polypeptide is Putative glutamate--cysteine ligase 2-1 (Streptomyces avermitilis (strain ATCC 31267 / DSM 46492 / JCM 5070 / NBRC 14893 / NCIMB 12804 / NRRL 8165 / MA-4680)).